The chain runs to 305 residues: Putative S-adenosyl-L-methionine-dependent methyltransferase MAB_3787 (305 aa).

Residues D132 and 161-162 contribute to the S-adenosyl-L-methionine site; that span reads DL.

It belongs to the UPF0677 family.

Its function is as follows. Exhibits S-adenosyl-L-methionine-dependent methyltransferase activity. In Mycobacteroides abscessus (strain ATCC 19977 / DSM 44196 / CCUG 20993 / CIP 104536 / JCM 13569 / NCTC 13031 / TMC 1543 / L948) (Mycobacterium abscessus), this protein is Putative S-adenosyl-L-methionine-dependent methyltransferase MAB_3787.